Consider the following 341-residue polypeptide: GTP 3',8-cyclase (341 aa).

The 221-residue stretch at 11-231 (KRNRPLRDLR…DLINKHMPVE (221 aa)) folds into the Radical SAM core domain. Position 20 (Arg20) interacts with GTP. Cys27 and Cys31 together coordinate [4Fe-4S] cluster. Residue Tyr33 coordinates S-adenosyl-L-methionine. Cys34 provides a ligand contact to [4Fe-4S] cluster. A GTP-binding site is contributed by Arg75. Position 79 (Gly79) interacts with S-adenosyl-L-methionine. Thr106 is a binding site for GTP. Ser130 serves as a coordination point for S-adenosyl-L-methionine. Lys167 is a binding site for GTP. Met201 is an S-adenosyl-L-methionine binding site. Residues Cys265 and Cys268 each coordinate [4Fe-4S] cluster. 270–272 (RAR) lines the GTP pocket. Residue Cys282 participates in [4Fe-4S] cluster binding.

Belongs to the radical SAM superfamily. MoaA family. Monomer and homodimer. It depends on [4Fe-4S] cluster as a cofactor.

It carries out the reaction GTP + AH2 + S-adenosyl-L-methionine = (8S)-3',8-cyclo-7,8-dihydroguanosine 5'-triphosphate + 5'-deoxyadenosine + L-methionine + A + H(+). The protein operates within cofactor biosynthesis; molybdopterin biosynthesis. Its function is as follows. Catalyzes the cyclization of GTP to (8S)-3',8-cyclo-7,8-dihydroguanosine 5'-triphosphate. Required for both nitrate assimilation and respiration. This Bacillus subtilis (strain 168) protein is GTP 3',8-cyclase.